The following is a 330-amino-acid chain: 1-aminocyclopropane-1-carboxylate oxidase 2 (330 aa).

The 101-residue stretch at 153–253 (PNFGTKVSNY…RMSIASFYNP (101 aa)) folds into the Fe2OG dioxygenase domain. His177, Asp179, and His234 together coordinate Fe cation.

The protein belongs to the iron/ascorbate-dependent oxidoreductase family. Monomer. Fe cation is required as a cofactor.

It carries out the reaction 1-aminocyclopropane-1-carboxylate + L-ascorbate + O2 = ethene + L-dehydroascorbate + hydrogen cyanide + CO2 + 2 H2O. It participates in alkene biosynthesis; ethylene biosynthesis via S-adenosyl-L-methionine; ethylene from S-adenosyl-L-methionine: step 2/2. The polypeptide is 1-aminocyclopropane-1-carboxylate oxidase 2 (ACO2) (Malus domestica (Apple)).